We begin with the raw amino-acid sequence, 396 residues long: Gap junction gamma-1 protein (396 aa).

Over 1-22 (MSWSFLTRLLEEIHNHSTFVGK) the chain is Cytoplasmic. The chain crosses the membrane as a helical span at residues 23–45 (IWLTVLIVFRIVLTAVGGESIYY). The Extracellular segment spans residues 46 to 75 (DEQSKFVCNTEQPGCENVCYDAFAPLSHVR). The chain crosses the membrane as a helical span at residues 76–95 (FWVFQIILVATPSVMYLGYA). Residues 96 to 175 (IHKIAKMEHG…RRIREDGLMK (80 aa)) are Cytoplasmic-facing. The segment at 145 to 165 (ELESEKENKEQNQSKPKHDGR) is disordered. Residues 147 to 156 (ESEKENKEQN) are compositionally biased toward basic and acidic residues. A helical membrane pass occupies residues 176–198 (IYVLQLLARTMFEVGFLIGQYFL). At 199 to 228 (YGFQVHPFYVCSRVPCPHKIDCFISRPTEK) the chain is on the extracellular side. A helical transmembrane segment spans residues 229-248 (TIFLLIMYGVTGLCLLLNIW). Residues 249 to 396 (EMLHLGFGTI…SGDGKTSVWI (148 aa)) lie on the Cytoplasmic side of the membrane. Positions 357–396 (NHQNNPHGPREKKAKVGSKAGSNKSSASSKSGDGKTSVWI) are disordered. A compositionally biased stretch (low complexity) spans 373-396 (GSKAGSNKSSASSKSGDGKTSVWI).

Belongs to the connexin family. Gamma-type subfamily. A connexon is composed of a hexamer of connexins. Interacts with CNST.

Its subcellular location is the cell membrane. The protein localises to the cell junction. The protein resides in the gap junction. Functionally, one gap junction consists of a cluster of closely packed pairs of transmembrane channels, the connexons, through which materials of low MW diffuse from one cell to a neighboring cell. The sequence is that of Gap junction gamma-1 protein (GJC1) from Sus scrofa (Pig).